A 195-amino-acid chain; its full sequence is CASP-like protein 1E2 (195 aa).

At methionine 1–proline 29 the chain is on the cytoplasmic side. The chain crosses the membrane as a helical span at residues phenylalanine 30–glycine 50. The Extracellular portion of the chain corresponds to valine 51–alanine 82. The helical transmembrane segment at phenylalanine 83–leucine 103 threads the bilayer. Residues serine 104–aspartate 122 lie on the Cytoplasmic side of the membrane. The helical transmembrane segment at leucine 123–glycine 143 threads the bilayer. At tyrosine 144–glutamine 165 the chain is on the extracellular side. A helical transmembrane segment spans residues valine 166–methionine 186. The Cytoplasmic portion of the chain corresponds to alanine 187–histidine 195.

The protein belongs to the Casparian strip membrane proteins (CASP) family. Homodimer and heterodimers.

Its subcellular location is the cell membrane. The protein is CASP-like protein 1E2 of Vitis vinifera (Grape).